Consider the following 719-residue polypeptide: Probable phosphatidylinositol phosphate kinase DDB_G0267588 (719 aa).

A disordered region spans residues 47 to 261 (VFSPIPPPPS…SDSPNRVRLN (215 aa)). Composition is skewed to low complexity over residues 57–77 (TTDNTTNTTTTTIETTATDNT) and 87–104 (IENNNNNNNSSISSPNSI). The span at 107–129 (ANKKDSIELEEDKEHSIKRKDGS) shows a compositional bias: basic and acidic residues. The span at 172-184 (FDATNDNHNPQEV) shows a compositional bias: polar residues. Residues 199–217 (TTTTTTTTTTTTSTNSTSN) are compositionally biased toward low complexity. Polar residues-rich tracts occupy residues 218–228 (KLPNNGDNTVS) and 248–261 (ASGSSDSPNRVRLN). Residue T262 is modified to Phosphothreonine. The PIPK domain occupies 316 to 718 (NAVGKSMGTE…RFQEFLSTII (403 aa)). Residues 579–638 (RENEPPSPSLLRSTLEDSSDFESPSMEQSSAGQQQQQRGSGNYDNSGAGRDSTTGGAAPK) form a disordered region. Low complexity predominate over residues 606–619 (QSSAGQQQQQRGSG).

Post-translationally, phosphorylated at Thr-262 by pkgB.

May be involved in signaling events that underlie chemotaxis via the chemoattractant-mediated pkgB phosphorylation. The protein is Probable phosphatidylinositol phosphate kinase DDB_G0267588 of Dictyostelium discoideum (Social amoeba).